Reading from the N-terminus, the 57-residue chain is uncharacterized protein (57 aa).

This is an uncharacterized protein from Saccharomyces cerevisiae (strain ATCC 204508 / S288c) (Baker's yeast).